Reading from the N-terminus, the 100-residue chain is uncharacterized protein (100 aa).

May interact with ribosomes.

This is an uncharacterized protein from Saccharomyces cerevisiae (strain ATCC 204508 / S288c) (Baker's yeast).